The following is a 245-amino-acid chain: Ribosomal RNA large subunit methyltransferase E (245 aa).

Residues 1–25 are disordered; sequence MTKSPIGGNRSGRKLGQKVKKGKLK. The segment covering 11 to 25 has biased composition (basic residues); the sequence is SGRKLGQKVKKGKLK. The S-adenosyl-L-methionine site is built by glycine 81, tryptophan 83, aspartate 104, aspartate 120, and aspartate 144. The active-site Proton acceptor is lysine 184.

It belongs to the class I-like SAM-binding methyltransferase superfamily. RNA methyltransferase RlmE family.

The protein resides in the cytoplasm. It carries out the reaction uridine(2552) in 23S rRNA + S-adenosyl-L-methionine = 2'-O-methyluridine(2552) in 23S rRNA + S-adenosyl-L-homocysteine + H(+). Functionally, specifically methylates the uridine in position 2552 of 23S rRNA at the 2'-O position of the ribose in the fully assembled 50S ribosomal subunit. The protein is Ribosomal RNA large subunit methyltransferase E of Rhizobium meliloti (strain 1021) (Ensifer meliloti).